Here is a 381-residue protein sequence, read N- to C-terminus: Stearoyl-[acyl-carrier-protein] 9-desaturase 1, chloroplastic (381 aa).

The transit peptide at 1 to 26 (MQVVGTVRVSGCGAVVAPSRRQCRVS) directs the protein to the chloroplast. 6 residues coordinate Fe cation: Glu120, Glu158, His161, Glu211, Glu244, and His247.

This sequence belongs to the fatty acid desaturase type 2 family. In terms of assembly, homodimer. Fe(2+) serves as cofactor.

It is found in the plastid. The protein localises to the chloroplast. The catalysed reaction is octadecanoyl-[ACP] + 2 reduced [2Fe-2S]-[ferredoxin] + O2 + 2 H(+) = (9Z)-octadecenoyl-[ACP] + 2 oxidized [2Fe-2S]-[ferredoxin] + 2 H2O. It participates in lipid metabolism; fatty acid metabolism. Converts stearoyl-ACP to oleoyl-ACP by introduction of a cis double bond between carbons 9 and 10 of the acyl chain. This chain is Stearoyl-[acyl-carrier-protein] 9-desaturase 1, chloroplastic, found in Oryza sativa subsp. indica (Rice).